We begin with the raw amino-acid sequence, 90 residues long: High mobility group nucleosome-binding domain-containing protein 4 (90 aa).

The disordered stretch occupies residues 1 to 90; it reads MPKRKAKGDA…QKAEGTGDAK (90 aa). Basic and acidic residues predominate over residues 7–23; it reads KGDAKGDKGKVKDEPQR. Residue serine 29 is modified to ADP-ribosylserine. The span at 37–64 shows a compositional bias: basic and acidic residues; sequence PEPRPKKAPAKKGEKLAKGRKGKAEVSK. The segment covering 65–83 has biased composition (polar residues); that stretch reads DGNNPAKNRDASTVQSQKA. Serine 80 is modified (phosphoserine). The residue at position 82 (lysine 82) is an N6-acetyllysine.

The protein belongs to the HMGN family.

The protein localises to the nucleus. This Bos taurus (Bovine) protein is High mobility group nucleosome-binding domain-containing protein 4 (HMGN4).